Consider the following 275-residue polypeptide: 3-methyl-2-oxobutanoate hydroxymethyltransferase (275 aa).

Positions 44 and 83 each coordinate Mg(2+). 3-methyl-2-oxobutanoate is bound by residues 44–45 (DS), Asp-83, and Lys-113. Position 115 (Glu-115) interacts with Mg(2+). Glu-182 functions as the Proton acceptor in the catalytic mechanism.

It belongs to the PanB family. As to quaternary structure, homodecamer; pentamer of dimers. Mg(2+) serves as cofactor.

It is found in the cytoplasm. The enzyme catalyses 3-methyl-2-oxobutanoate + (6R)-5,10-methylene-5,6,7,8-tetrahydrofolate + H2O = 2-dehydropantoate + (6S)-5,6,7,8-tetrahydrofolate. It functions in the pathway cofactor biosynthesis; (R)-pantothenate biosynthesis; (R)-pantoate from 3-methyl-2-oxobutanoate: step 1/2. In terms of biological role, catalyzes the reversible reaction in which hydroxymethyl group from 5,10-methylenetetrahydrofolate is transferred onto alpha-ketoisovalerate to form ketopantoate. The polypeptide is 3-methyl-2-oxobutanoate hydroxymethyltransferase (Clostridioides difficile (strain 630) (Peptoclostridium difficile)).